The sequence spans 159 residues: MEKLSEKDKGLIRDSWESLGKNKVPHGIVLFTRLFELDPALLTLFSYSTNCGDAPECLSSPEFLEHVTKVMLVIDAAVSHLDDLHTLEDFLLNLGRKHQAVGVNTQSFALVGESLLYMLQSSLGPAYTTSLRQAWLTMYSIVVSAMTRGWAKNGEHKSN.

The region spanning 3-151 is the Globin domain; sequence KLSEKDKGLI…VVSAMTRGWA (149 aa). The heme b site is built by histidine 66 and histidine 98.

Belongs to the globin family. As to quaternary structure, monomer. Homodimers and homotetramers. Mainly monomeric but also detected as part of homodimers and homotetramers. In terms of tissue distribution, detected in brain, eye and gill, but not in muscle and blood (at protein level). Particularly high expression in the periventral zone of tectum opticum, with significant expression detected in white matter, preglomerular nucleus, posterior tubular nucleus, torus longitudinalis, hypothalamus, pituitary gland, posterior tuberculum, hypothalamus, synencephalon and formatio reticularis. Detected also in brain regions of the visual system, predominantly in parts of tectum opticum and torus semicircularis, area dorsalis telencephali and medulla oblongata. Strong expression observed in sensory epithelium of peripheral olfactory organ, and outer and inner nuclear layers and ganglion cell layer of retina.

It localises to the cytoplasm. Its subcellular location is the cytosol. The protein resides in the mitochondrion matrix. It carries out the reaction Fe(III)-heme b-[protein] + nitric oxide + H2O = Fe(II)-heme b-[protein] + nitrite + 2 H(+). Its function is as follows. Monomeric globin with a bis-histidyl six-coordinate heme-iron atom through which it can bind dioxygen, carbon monoxide and nitric oxide. Could help transport oxygen and increase its availability to the metabolically active neuronal tissues, though its low quantity in tissues as well as its high affinity for dioxygen, which may limit its oxygen-releasing ability, argue against it. The ferrous/deoxygenated form exhibits a nitrite reductase activity and it could produce nitric oxide which in turn inhibits cellular respiration in response to hypoxia. In its ferrous/deoxygenated state, it may also exhibit GDI (Guanine nucleotide Dissociation Inhibitor) activity toward heterotrimeric G-alpha proteins, thereby regulating signal transduction to facilitate neuroprotective responses in the wake of hypoxia and associated oxidative stress. This Danio rerio (Zebrafish) protein is Neuroglobin (ngb).